Here is a 125-residue protein sequence, read N- to C-terminus: Large ribosomal subunit protein bL12 (125 aa).

Belongs to the bacterial ribosomal protein bL12 family. In terms of assembly, homodimer. Part of the ribosomal stalk of the 50S ribosomal subunit. Forms a multimeric L10(L12)X complex, where L10 forms an elongated spine to which 2 to 4 L12 dimers bind in a sequential fashion. Binds GTP-bound translation factors.

Functionally, forms part of the ribosomal stalk which helps the ribosome interact with GTP-bound translation factors. Is thus essential for accurate translation. The chain is Large ribosomal subunit protein bL12 from Heliobacterium modesticaldum (strain ATCC 51547 / Ice1).